Reading from the N-terminus, the 187-residue chain is UPF0340 protein SP70585_0722 (187 aa).

This sequence belongs to the UPF0340 family.

The chain is UPF0340 protein SP70585_0722 from Streptococcus pneumoniae (strain 70585).